We begin with the raw amino-acid sequence, 495 residues long: Ectonucleoside triphosphate diphosphohydrolase 2 (495 aa).

At 1–7 (MAGKVRS) the chain is on the cytoplasmic side. A helical membrane pass occupies residues 8–28 (LLPPLLLAAAGLAGLLLLCVP). Residues 29–462 (TRDVREPPAL…PGLRKGTDFS (434 aa)) lie on the Extracellular side of the membrane. N-linked (GlcNAc...) asparagine glycosylation occurs at Asn-64. Cys-75 and Cys-99 are oxidised to a cystine. The N-linked (GlcNAc...) asparagine glycan is linked to Asn-129. The active-site Proton acceptor is Glu-165. Residue 204 to 208 (GASTQ) coordinates ATP. 4 disulfides stabilise this stretch: Cys-242–Cys-284, Cys-265–Cys-310, Cys-323–Cys-328, and Cys-377–Cys-399. N-linked (GlcNAc...) asparagine glycosylation occurs at Asn-294. N-linked (GlcNAc...) asparagine glycans are attached at residues Asn-378 and Asn-443. A helical membrane pass occupies residues 463 to 483 (SWVVLLLLFASALLAALVLLL). The Cytoplasmic segment spans residues 484 to 495 (RQVHSAKLPSTI).

This sequence belongs to the GDA1/CD39 NTPase family. The cofactor is Ca(2+). It depends on Mg(2+) as a cofactor. Brain, placenta, skeletal muscle, kidney, pancreas, heart, ovary, testis, colon, small intestine, prostate and pancreas. No expression in adult thymus, spleen, lung, liver and peripheral blood leukocytes.

The protein resides in the cell membrane. It localises to the endoplasmic reticulum membrane. In terms of biological role, in the nervous system, could hydrolyze ATP and other nucleotides to regulate purinergic neurotransmission. Hydrolyzes ADP only to a marginal extent. The order of activity with different substrates is ATP &gt; GTP &gt; CTP = ITP &gt; UTP &gt;&gt; ADP = UDP. This Homo sapiens (Human) protein is Ectonucleoside triphosphate diphosphohydrolase 2 (ENTPD2).